The following is a 121-amino-acid chain: Large ribosomal subunit protein bL20 (121 aa).

Belongs to the bacterial ribosomal protein bL20 family.

Binds directly to 23S ribosomal RNA and is necessary for the in vitro assembly process of the 50S ribosomal subunit. It is not involved in the protein synthesizing functions of that subunit. The protein is Large ribosomal subunit protein bL20 of Moorella thermoacetica (strain ATCC 39073 / JCM 9320).